Here is a 1239-residue protein sequence, read N- to C-terminus: Codanin-1 (1239 aa).

Residue A2 is modified to N-acetylalanine. A compositionally biased stretch (polar residues) spans 61-72 (SRVLPQGPSTPA). Disordered regions lie at residues 61 to 249 (SRVL…PPGC) and 261 to 299 (KART…ADPA). T70 bears the Phosphothreonine mark. Composition is skewed to low complexity over residues 77-88 (ASAALPARQGAP), 95-116 (ARSQ…PLAR), and 138-179 (GAAE…LSNL). Positions 193-213 (AGRTKPSRRINPTPVSEERSL) are interaction with ASF1A/B. The segment covering 219 to 238 (CFTSPPISCVPSSQPSTLDT) has biased composition (polar residues). S270 is subject to Phosphoserine. 2 helical membrane-spanning segments follow: residues 317-337 (CIAE…LQLL) and 631-651 (FAVV…VAFL).

In terms of assembly, interacts with ASF1A and ASF1B. Found in a cytosolic complex with ASF1A, ASF1B, IPO4 and histones H3.1 and H4. Widely expressed in adult mice, the highest levels can be measured in erythropoietic cells.

It is found in the cytoplasm. The protein localises to the nucleus. The protein resides in the membrane. Its function is as follows. May act as a negative regulator of ASF1 in chromatin assembly. This chain is Codanin-1 (Cdan1), found in Mus musculus (Mouse).